Reading from the N-terminus, the 156-residue chain is Arginine repressor (156 aa).

This sequence belongs to the ArgR family.

It localises to the cytoplasm. Its pathway is amino-acid biosynthesis; L-arginine biosynthesis [regulation]. Functionally, regulates arginine biosynthesis genes. The protein is Arginine repressor of Proteus mirabilis (strain HI4320).